The primary structure comprises 588 residues: MGTALVYHEDMTATRLLWDDPECEIECPERLTAALDGLRQRGLEERCQCLSVCEASEEELGLVHSPEYIALVQKTQTLDKEELHTLSKQYDAVYFHPDTFHCARLAAGAALRLVDAVLTGAVHNGVALVRPPGHHSQRAAANGFCVFNNVAIAARHAKQKYGLQRILIVDWDVHHGQGIQYIFEDDPSVLYFSWHRYEHGNFWPFLPESDADTVGRGRGQGFTVNLPWNQVGMGNADYLAAFLHVLLPLAFEFDPELVLVSAGFDSAIGDPEGQMQATPECFAHLTQLLQVLAGGRICAVLECPGVYPECSDSPDPSLDKPPTNSTCTVAEDSLSPCLDRPCHRPTPPICIAVALAVSGAALDLPPGVLHQEGSALREETEAWARLHKSQFQDDDLAALGKSLCLLDGILDGQIRSAIATTTALATAATLGVLIQRCVAHRGQRRILWLSIRGKEADIWSMFHFSTPLPQTTGGFLSFILGLVLPLAYGFQPDMVLMALGPAHGLQNAQAALLAAMLRSPVGGRILALVEEESILQLARTLAQVLHGETPPSLGPFSMASPEEIQALMFLKAQLEPRWKLLQVAAPPP.

Positions Met-1 to Glu-302 are histone deacetylase. Residue His-135 is part of the active site.

The protein belongs to the histone deacetylase family. HD type 2 subfamily. Interacts with HDAC3. Interacts with HDAC2 and NCOR2/SMRT. Interacts with HSPA8/HSC70. Interacts with MSH2.

It localises to the cytoplasm. It is found in the nucleus. It catalyses the reaction N(8)-acetylspermidine + H2O = spermidine + acetate. The enzyme catalyses N-acetylputrescine + H2O = putrescine + acetate. The catalysed reaction is N-acetylcadaverine + H2O = cadaverine + acetate. It carries out the reaction N(6)-acetyl-L-lysyl-[protein] + H2O = L-lysyl-[protein] + acetate. Its function is as follows. Polyamine deacetylase (PDAC), which acts preferentially on N(8)-acetylspermidine, and also on acetylcadaverine and acetylputrescine. Exhibits attenuated catalytic activity toward N(1),N(8)-diacetylspermidine and very low activity, if any, toward N(1)-acetylspermidine. Histone deacetylase activity has been observed in vitro. Has also been shown to be involved in MSH2 deacetylation. The physiological relevance of protein/histone deacetylase activity is unclear and could be very weak. May play a role in the promotion of late stages of autophagy, possibly autophagosome-lysosome fusion and/or lysosomal exocytosis in neuroblastoma cells. May play a role in homologous recombination. May promote DNA mismatch repair. This Rattus norvegicus (Rat) protein is Polyamine deacetylase HDAC10 (Hdac10).